Here is a 184-residue protein sequence, read N- to C-terminus: MAKAPTFFSKLLKQILFANRKPFLYYKLALILFVGFVILFQVFMLRAALNGEKGINGANGTDVARSSFISIYVIGNKGVGFSLLADQPGLVYFLQGFLSFIALFFLVFSTSYNYIFWITTLAFGSLGNFFDRLTSGSGEVLDYFVFSGGNSVFNLADCCITFSFIGLFLSFLIQFFKEMKQTKS.

The next 3 membrane-spanning stretches (helical) occupy residues 23-43 (FLYYKLALILFVGFVILFQVF), 88-108 (PGLVYFLQGFLSFIALFFLVF), and 110-130 (TSYNYIFWITTLAFGSLGNFF). Residues Asp-142 and Asp-157 contribute to the active site. Residues 156-176 (ADCCITFSFIGLFLSFLIQFF) form a helical membrane-spanning segment.

This sequence belongs to the peptidase A8 family.

The protein resides in the cell membrane. The catalysed reaction is Release of signal peptides from bacterial membrane prolipoproteins. Hydrolyzes -Xaa-Yaa-Zaa-|-(S,diacylglyceryl)Cys-, in which Xaa is hydrophobic (preferably Leu), and Yaa (Ala or Ser) and Zaa (Gly or Ala) have small, neutral side chains.. Its pathway is protein modification; lipoprotein biosynthesis (signal peptide cleavage). Functionally, this protein specifically catalyzes the removal of signal peptides from prolipoproteins. This chain is Lipoprotein signal peptidase, found in Mycoplasma pneumoniae (strain ATCC 29342 / M129 / Subtype 1) (Mycoplasmoides pneumoniae).